The following is a 65-amino-acid chain: Small ribosomal subunit protein bS21B (65 aa).

It belongs to the bacterial ribosomal protein bS21 family.

The chain is Small ribosomal subunit protein bS21B from Geobacter sulfurreducens (strain ATCC 51573 / DSM 12127 / PCA).